Reading from the N-terminus, the 769-residue chain is Major inner protein P1 (769 aa).

Homodimer. Associates with the polymerase complex.

Its subcellular location is the virion. Functionally, P1 is the major inner capsid (core) protein of the polyhedral procapsid, which is responsible for genomic replication and transcription. Forms a dodecahedral shell from 60 asymmetric dimers. Binds to RNA and may be involved in genomic packaging. In Pseudomonas phage phi6 (Bacteriophage phi-6), this protein is Major inner protein P1 (P1).